Here is a 115-residue protein sequence, read N- to C-terminus: Cell division topological specificity factor (115 aa).

Residues 89 to 115 (TGQIQLKEPKNQSEVDSPETEGKDQNS) form a disordered region.

This sequence belongs to the MinE family.

In terms of biological role, prevents the cell division inhibition by proteins MinC and MinD at internal division sites while permitting inhibition at polar sites. This ensures cell division at the proper site by restricting the formation of a division septum at the midpoint of the long axis of the cell. The chain is Cell division topological specificity factor from Prochlorococcus marinus (strain NATL2A).